Here is a 24-residue protein sequence, read N- to C-terminus: Humanin-like 13 (24 aa).

It belongs to the humanin family.

The protein localises to the secreted. It is found in the cytoplasm. In terms of biological role, plays a role as a neuroprotective and antiapoptotic factor. This Homo sapiens (Human) protein is Humanin-like 13.